Here is a 108-residue protein sequence, read N- to C-terminus: Iron-sulfur cluster assembly protein CyaY (108 aa).

Belongs to the frataxin family.

Functionally, involved in iron-sulfur (Fe-S) cluster assembly. May act as a regulator of Fe-S biogenesis. In Burkholderia ambifaria (strain MC40-6), this protein is Iron-sulfur cluster assembly protein CyaY.